Here is a 539-residue protein sequence, read N- to C-terminus: Eukaryotic translation initiation factor 3 subunit L (539 aa).

The 209-residue stretch at T306–H514 folds into the PCI domain.

Belongs to the eIF-3 subunit L family. In terms of assembly, component of the eukaryotic translation initiation factor 3 (eIF-3) complex. The eIF-3 complex interacts with pix.

It is found in the cytoplasm. In terms of biological role, component of the eukaryotic translation initiation factor 3 (eIF-3) complex, which is involved in protein synthesis of a specialized repertoire of mRNAs and, together with other initiation factors, stimulates binding of mRNA and methionyl-tRNAi to the 40S ribosome. The eIF-3 complex specifically targets and initiates translation of a subset of mRNAs involved in cell proliferation. The protein is Eukaryotic translation initiation factor 3 subunit L of Drosophila melanogaster (Fruit fly).